We begin with the raw amino-acid sequence, 169 residues long: Peptide deformylase (169 aa).

Fe cation is bound by residues Cys-91 and His-133. The active site involves Glu-134. Residue His-137 participates in Fe cation binding.

It belongs to the polypeptide deformylase family. Fe(2+) serves as cofactor.

The enzyme catalyses N-terminal N-formyl-L-methionyl-[peptide] + H2O = N-terminal L-methionyl-[peptide] + formate. In terms of biological role, removes the formyl group from the N-terminal Met of newly synthesized proteins. Requires at least a dipeptide for an efficient rate of reaction. N-terminal L-methionine is a prerequisite for activity but the enzyme has broad specificity at other positions. This Klebsiella pneumoniae (strain 342) protein is Peptide deformylase.